Reading from the N-terminus, the 362-residue chain is Very-long-chain (3R)-3-hydroxyacyl-CoA dehydratase 3 (362 aa).

Met1 carries the N-acetylmethionine modification. Residues 1-149 (METQVLTPHV…ETLTNLKKGY (149 aa)) lie on the Cytoplasmic side of the membrane. The CS domain maps to 5–94 (VLTPHVYWAQ…KGSHWWERLT (90 aa)). The residue at position 7 (Thr7) is a Phosphothreonine. Residues 111 to 138 (LDESDAEMELRAKEEERLNKLRLEREGS) are a coiled coil. The residue at position 114 (Ser114) is a Phosphoserine. Residues 150 to 170 (LFMYNLVQLLGFSWIFVNLTV) traverse the membrane as a helical segment. The Lumenal segment spans residues 171-189 (RFFILGKESFYDTFHNVAD). The helical transmembrane segment at 190–210 (MMYFCQMLALVETLNAAIGVT) threads the bilayer. Topologically, residues 211-212 (ST) are cytoplasmic. A helical transmembrane segment spans residues 213–233 (PVLPALIQFLGRNFILFLVFG). Residues 234-242 (TMEEMQNKA) lie on the Lumenal side of the membrane. A helical membrane pass occupies residues 243-263 (VVFFVFYSWSAIEIFRYPFYM). Topologically, residues 264-280 (LSCIDMDWKVLTWLRYT) are cytoplasmic. Residues 281–301 (MWIPLYPLGCLSEAVAVIQSI) traverse the membrane as a helical segment. Catalysis depends on residues Tyr286 and Glu293. The Lumenal segment spans residues 302–322 (PVFNESGRFSFTLPYPVKMKV). A helical membrane pass occupies residues 323–343 (RFSFFLQVYLVMLFLGLYINF). Topologically, residues 344 to 362 (RHLYKQRRRRYGQKKKKLH) are cytoplasmic.

The protein belongs to the very long-chain fatty acids dehydratase HACD family. In terms of assembly, may interact with enzymes of the ELO family (including ELOVL1); with those enzymes that mediate condensation, the first of the four steps of the reaction cycle responsible for fatty acids elongation, may be part of a larger fatty acids elongase complex. Interacts with RAC1. Associates with internalized insulin receptor/INSR complexes on Golgi/endosomal membranes; HACD3/PTPLAD1 together with ATIC and PRKAA2/AMPK2 is proposed to be part of a signaling network regulating INSR autophosphorylation and endocytosis.

It is found in the endoplasmic reticulum membrane. The catalysed reaction is a very-long-chain (3R)-3-hydroxyacyl-CoA = a very-long-chain (2E)-enoyl-CoA + H2O. The enzyme catalyses (3R)-hydroxyhexadecanoyl-CoA = (2E)-hexadecenoyl-CoA + H2O. The protein operates within lipid metabolism; fatty acid biosynthesis. Functionally, catalyzes the third of the four reactions of the long-chain fatty acids elongation cycle. This endoplasmic reticulum-bound enzymatic process, allows the addition of two carbons to the chain of long- and very long-chain fatty acids/VLCFAs per cycle. This enzyme catalyzes the dehydration of the 3-hydroxyacyl-CoA intermediate into trans-2,3-enoyl-CoA, within each cycle of fatty acid elongation. Thereby, it participates in the production of VLCFAs of different chain lengths that are involved in multiple biological processes as precursors of membrane lipids and lipid mediators. Involved in Rac1-signaling pathways leading to the modulation of gene expression. Promotes insulin receptor/INSR autophosphorylation and is involved in INSR internalization. The sequence is that of Very-long-chain (3R)-3-hydroxyacyl-CoA dehydratase 3 from Mus musculus (Mouse).